A 185-amino-acid polypeptide reads, in one-letter code: Peptidyl-tRNA hydrolase (185 aa).

Y14 provides a ligand contact to tRNA. H19 acts as the Proton acceptor in catalysis. TRNA contacts are provided by Y65, N67, and N113.

It belongs to the PTH family. Monomer.

The protein resides in the cytoplasm. It catalyses the reaction an N-acyl-L-alpha-aminoacyl-tRNA + H2O = an N-acyl-L-amino acid + a tRNA + H(+). Hydrolyzes ribosome-free peptidyl-tRNAs (with 1 or more amino acids incorporated), which drop off the ribosome during protein synthesis, or as a result of ribosome stalling. In terms of biological role, catalyzes the release of premature peptidyl moieties from peptidyl-tRNA molecules trapped in stalled 50S ribosomal subunits, and thus maintains levels of free tRNAs and 50S ribosomes. This is Peptidyl-tRNA hydrolase from Rickettsia rickettsii (strain Iowa).